Reading from the N-terminus, the 177-residue chain is Trafficking regulator of GLUT4 1 (177 aa).

Topologically, residues 1–105 (MAHPVQSEFP…QDQEAPRDYL (105 aa)) are cytoplasmic. Serine 48, serine 87, and serine 88 each carry phosphoserine. The tract at residues 71-92 (EAPLPRSPSRASSRRASSIATT) is disordered. A compositionally biased stretch (low complexity) spans 72–88 (APLPRSPSRASSRRASS). Residues 106 to 126 (ILAVVACFCPVWPLNLIPLII) constitute an intramembrane region (helical). The Cytoplasmic portion of the chain corresponds to 127 to 153 (SIMSRSSMQQGNVDGARRLGRLARLLS). Residues 154–174 (ITLIIMGIVIIMVAVTVNFTV) form a helical membrane-spanning segment. At 175–177 (QKK) the chain is on the extracellular side.

The protein belongs to the CD225/Dispanin family. As to quaternary structure, interacts with SLC2A4; the interaction is required for proper SLC2A4 reacycling after insulin stimulation. As to expression, expressed at high levels in heart, mammary gland, adrenal gland, stomach, smooth muscle and skeletal muscle, and at lower levels in brain and lung. Strongly down-regulated in lung cancer tissues, due to hypermethylation of the corresponding locus. Expressed in adipose tissue.

The protein localises to the cell membrane. It localises to the endomembrane system. It is found in the cytoplasm. Its subcellular location is the perinuclear region. In terms of biological role, regulates insulin-mediated adipose tissue glucose uptake and transport by modulation of SLC2A4 recycling. Not required for SLC2A4 membrane fusion upon an initial stimulus, but rather is necessary for proper protein recycling during prolonged insulin stimulation. In Homo sapiens (Human), this protein is Trafficking regulator of GLUT4 1.